Here is a 110-residue protein sequence, read N- to C-terminus: BET1-like protein (110 aa).

Over 1–85 the chain is Cytoplasmic; sequence MADPWNRGHG…MVRSGRDNRK (85 aa). One can recognise a t-SNARE coiled-coil homology domain in the interval 14–76; sequence DMLDAENKRM…TGSVKRFSTM (63 aa). A helical; Anchor for type IV membrane protein membrane pass occupies residues 86-106; sequence ILCYVSVGLVVAFFLLYYLVS. At 107 to 110 the chain is on the lumenal side; the sequence is RMQN.

In terms of assembly, component of a SNARE complex consisting of stx5, ykt6, gosr2 and bet1l.

The protein localises to the golgi apparatus membrane. Functionally, vesicle SNARE required for targeting and fusion of retrograde transport vesicles with the Golgi complex. Required for the integrity of the Golgi complex. This chain is BET1-like protein (bet1l), found in Danio rerio (Zebrafish).